A 251-amino-acid chain; its full sequence is Urease accessory protein UreF (251 aa).

The segment at 1–20 (MAPAPDPAPAGSAAPDPASA) is disordered. A compositionally biased stretch (low complexity) spans 9-20 (PAGSAAPDPASA).

This sequence belongs to the UreF family. In terms of assembly, ureD, UreF and UreG form a complex that acts as a GTP-hydrolysis-dependent molecular chaperone, activating the urease apoprotein by helping to assemble the nickel containing metallocenter of UreC. The UreE protein probably delivers the nickel.

Its subcellular location is the cytoplasm. Required for maturation of urease via the functional incorporation of the urease nickel metallocenter. The protein is Urease accessory protein UreF of Paracidovorax citrulli (strain AAC00-1) (Acidovorax citrulli).